The sequence spans 534 residues: Glucose-6-phosphate isomerase (534 aa).

Residue Glu-356 is the Proton donor of the active site. Catalysis depends on residues His-387 and Lys-502.

It belongs to the GPI family.

The protein localises to the cytoplasm. The catalysed reaction is alpha-D-glucose 6-phosphate = beta-D-fructose 6-phosphate. It participates in carbohydrate biosynthesis; gluconeogenesis. The protein operates within carbohydrate degradation; glycolysis; D-glyceraldehyde 3-phosphate and glycerone phosphate from D-glucose: step 2/4. Catalyzes the reversible isomerization of glucose-6-phosphate to fructose-6-phosphate. The polypeptide is Glucose-6-phosphate isomerase (Desulfotalea psychrophila (strain LSv54 / DSM 12343)).